The primary structure comprises 343 residues: Globoside alpha-1,3-N-acetylgalactosaminyltransferase 1 (343 aa).

Over 1-6 (MISRKA) the chain is Cytoplasmic. A helical; Signal-anchor for type II membrane protein membrane pass occupies residues 7 to 27 (LGSLVCLSAVATLIWIASGNW). Over 28–343 (KVHYLPYYLP…VDKNYQEVRN (316 aa)) the chain is Lumenal. N-linked (GlcNAc...) asparagine glycosylation is present at Asn104. Substrate-binding positions include 112 to 117 (FAVGKY), 202 to 204 (DID), and 224 to 227 (HPGY). Mn(2+) contacts are provided by Asp202 and Asp204. Residue Glu294 is the Nucleophile of the active site.

It belongs to the glycosyltransferase 6 family. Requires Mn(2+) as cofactor.

Its subcellular location is the golgi apparatus membrane. The protein operates within protein modification; protein glycosylation. In terms of biological role, may catalyze the formation of some glycolipid via the addition of N-acetylgalactosamine (GalNAc) in alpha-1,3-linkage to some substrate. Glycolipids probably serve for adherence of some pathogens. This is Globoside alpha-1,3-N-acetylgalactosaminyltransferase 1 from Gallus gallus (Chicken).